The primary structure comprises 240 residues: Uridylate kinase (240 aa).

An ATP-binding site is contributed by 13-16; sequence KLSG. Residues 21–26 are involved in allosteric activation by GTP; sequence GEKGFG. G55 serves as a coordination point for UMP. Positions 56 and 60 each coordinate ATP. UMP is bound by residues D75 and 136–143; that span reads IGNPYFST. Residues N164, Y170, and D173 each coordinate ATP.

It belongs to the UMP kinase family. As to quaternary structure, homohexamer.

The protein localises to the cytoplasm. The catalysed reaction is UMP + ATP = UDP + ADP. The protein operates within pyrimidine metabolism; CTP biosynthesis via de novo pathway; UDP from UMP (UMPK route): step 1/1. With respect to regulation, allosterically activated by GTP. Inhibited by UTP. In terms of biological role, catalyzes the reversible phosphorylation of UMP to UDP. The chain is Uridylate kinase from Staphylococcus aureus (strain Newman).